The primary structure comprises 720 residues: Glycine--tRNA ligase beta subunit (720 aa).

It belongs to the class-II aminoacyl-tRNA synthetase family. In terms of assembly, tetramer of two alpha and two beta subunits.

Its subcellular location is the cytoplasm. The enzyme catalyses tRNA(Gly) + glycine + ATP = glycyl-tRNA(Gly) + AMP + diphosphate. The chain is Glycine--tRNA ligase beta subunit from Dinoroseobacter shibae (strain DSM 16493 / NCIMB 14021 / DFL 12).